Reading from the N-terminus, the 428-residue chain is Histidine--tRNA ligase (428 aa).

The protein belongs to the class-II aminoacyl-tRNA synthetase family. In terms of assembly, homodimer.

The protein localises to the cytoplasm. The catalysed reaction is tRNA(His) + L-histidine + ATP = L-histidyl-tRNA(His) + AMP + diphosphate + H(+). In Pseudomonas entomophila (strain L48), this protein is Histidine--tRNA ligase.